Here is a 413-residue protein sequence, read N- to C-terminus: High zinc activated nuclear receptor protein (413 aa).

The segment at residues 11–86 (LGNCKICLQR…EGMKIELVQL (76 aa)) is a DNA-binding region (nuclear receptor). 2 consecutive NR C4-type zinc fingers follow at residues 14-34 (CKIC…CRAC) and 50-69 (CKEK…CRSC). The segment at 101–412 (SIDPLFTPNV…TSQCIVHTKN (312 aa)) is required for zinc-binding. The region spanning 135–396 (QMTSGYAMFL…VCCKNFKEDA (262 aa)) is the NR LBD domain.

It belongs to the nuclear hormone receptor family. As to expression, weakly expressed in intestinal cells in the absence of zinc supplementation. Upon zinc supplementation, accumulates in alimentary tract cells, and it is mainly expressed in the intestine.

The protein resides in the nucleus. It localises to the cytoplasm. Functionally, nuclear receptor transcription factor that binds to DNA enhancer elements to promote the transcription of genes required to maintain micronutrient homeostasis. Direct binding to its ligand zinc allows for nuclear accumulation and activation, which thereby induces the transcription of genes required to promote the storage and detoxification of excess dietary zinc. This in turn, allows for internal zinc levels to be detected and regulated. This chain is High zinc activated nuclear receptor protein, found in Caenorhabditis elegans.